Here is a 765-residue protein sequence, read N- to C-terminus: Ankyrin repeat and protein kinase domain-containing protein 1 (765 aa).

Residues 22 to 289 form the Protein kinase domain; that stretch reads EGDWRLVASG…DITIETDILL (268 aa). ATP is bound by residues 28 to 36 and Lys51; that span reads VASGGFSQV. Asp145 serves as the catalytic Proton acceptor. ANK repeat units lie at residues 361–390, 394–423, 427–456, 460–489, 493–522, 526–555, 559–588, 592–621, 625–654, 658–687, 691–720, and 724–753; these read NKVT…DVDC, SGYT…DANR, DGWA…CVDA, EGWT…DPNL, EGKT…ELDA, NLRT…VPDA, SGYG…SLEL, QGWT…NMGA, VNWT…DPNA, SGWT…NVHA, VGWT…QLDV, and VSCT…SVAT.

It belongs to the protein kinase superfamily. TKL Ser/Thr protein kinase family. As to expression, highly expressed in brain and weakly expressed in placenta and spinal cord.

The enzyme catalyses L-seryl-[protein] + ATP = O-phospho-L-seryl-[protein] + ADP + H(+). It carries out the reaction L-threonyl-[protein] + ATP = O-phospho-L-threonyl-[protein] + ADP + H(+). The sequence is that of Ankyrin repeat and protein kinase domain-containing protein 1 (ANKK1) from Homo sapiens (Human).